The following is a 337-amino-acid chain: Inositol 2-dehydrogenase (337 aa).

The protein belongs to the Gfo/Idh/MocA family. Homotetramer.

It carries out the reaction myo-inositol + NAD(+) = scyllo-inosose + NADH + H(+). Its function is as follows. Involved in the oxidation of myo-inositol (MI) to 2-keto-myo-inositol (2KMI or 2-inosose). This Klebsiella pneumoniae (strain 342) protein is Inositol 2-dehydrogenase.